The sequence spans 353 residues: Guanine nucleotide-binding protein subunit beta-5 (353 aa).

7 WD repeats span residues 61–100, 103–142, 151–192, 194–236, 237–276, 278–320, and 323–352; these read GHGN…KEHA, MPCT…NENM, MHTN…QSFH, HGAD…QAFE, THES…EVAI, SKES…RVSI, and GHEN…LRVW.

Belongs to the WD repeat G protein beta family. In terms of assembly, component of a complex composed of RGS9 (isoform RGS9-1), GNB5 and RGS9BP; within this complex, the presence of GNB5 stabilizes both itself and RGS9 and increases RGS9 GTPase-activating protein (GAP) activity. Interacts with RGS7, forming the RGS7-GNB5 complex; within this complex, the presence of GNB5 increases RGS7 GTPase-activating protein (GAP) activity. Interacts with GPR158; promotes the GTPase activator activity of the RGS7-GNB5 complex in absence of glycine, in contrast GTPase activator activity of the RGS7-GNB5 complex is inhibited in presence of glycine. Interacts with RGS6.

The protein localises to the membrane. In terms of biological role, enhances GTPase-activating protein (GAP) activity of regulator of G protein signaling (RGS) proteins, such as RGS7 and RGS9, hence involved in the termination of the signaling initiated by the G protein coupled receptors (GPCRs) by accelerating the GTP hydrolysis on the G-alpha subunits, thereby promoting their inactivation. Increases RGS7 GTPase-activating protein (GAP) activity, thereby regulating mood and cognition. Increases RGS9 GTPase-activating protein (GAP) activity, hence contributes to the deactivation of G protein signaling initiated by D(2) dopamine receptors. May play an important role in neuronal signaling, including in the parasympathetic, but not sympathetic, control of heart rate. The sequence is that of Guanine nucleotide-binding protein subunit beta-5 (GNB5) from Oryctolagus cuniculus (Rabbit).